The primary structure comprises 193 residues: CASP-like protein 2D1 (193 aa).

The disordered stretch occupies residues 1–24; that stretch reads MRANNNNTREEERSSSSKQQQPQA. Over 1–29 the chain is Cytoplasmic; that stretch reads MRANNNNTREEERSSSSKQQQPQAHMSLK. Residues 30–50 traverse the membrane as a helical segment; sequence IIDSCLRLSVVPLSVATIWLT. Residues 51 to 73 are Extracellular-facing; it reads VTNHESNPDYGNLDYNSIMGLKY. A helical transmembrane segment spans residues 74–94; the sequence is MVGVSAISAIYALLSTISLWV. Residues 95-109 are Cytoplasmic-facing; it reads TCLVSKAWLFFVPDQ. The helical transmembrane segment at 110-132 threads the bilayer; the sequence is VLAYVMTTSVAGATEIVYLLNKG. Over 133–151 the chain is Extracellular; sequence DKIVTWSEMCSSYPHYCSK. A helical membrane pass occupies residues 152–172; the sequence is LTIALGLHVFVLFFFLFLSVI. Over 173-193 the chain is Cytoplasmic; the sequence is SAYRAFSPFDPPCDSQTNIDA.

This sequence belongs to the Casparian strip membrane proteins (CASP) family. Homodimer and heterodimers.

The protein resides in the cell membrane. The protein is CASP-like protein 2D1 of Arabidopsis lyrata subsp. lyrata (Lyre-leaved rock-cress).